A 207-amino-acid polypeptide reads, in one-letter code: MLGRPKFVLASGSPRRLALLNQAGIEPDALRPADIDETPTRGELPRSCANRLARAKAEAALKSVQLDDDLRGAFVLAADTVVAVGRRILPKAELVDEASQCLRLLSGRNHRVYTAICLVTPKESFRQRLIETKVRFKRLNEDDIEAYVGSGEWRGKAGGYAVQGIAGTFVVKIVGSYTNIVGLPLYETISLLGGEGFPIRAGWLNAS.

Asp-79 acts as the Proton acceptor in catalysis.

It belongs to the Maf family. YhdE subfamily. A divalent metal cation serves as cofactor.

It is found in the cytoplasm. The enzyme catalyses dTTP + H2O = dTMP + diphosphate + H(+). The catalysed reaction is UTP + H2O = UMP + diphosphate + H(+). In terms of biological role, nucleoside triphosphate pyrophosphatase that hydrolyzes dTTP and UTP. May have a dual role in cell division arrest and in preventing the incorporation of modified nucleotides into cellular nucleic acids. The sequence is that of dTTP/UTP pyrophosphatase from Rhodopseudomonas palustris (strain BisB18).